A 220-amino-acid chain; its full sequence is Uracil-DNA glycosylase 1 (220 aa).

The active-site Proton acceptor is the Asp-65.

The protein belongs to the uracil-DNA glycosylase (UDG) superfamily. UNG family.

It is found in the cytoplasm. It carries out the reaction Hydrolyzes single-stranded DNA or mismatched double-stranded DNA and polynucleotides, releasing free uracil.. Functionally, excises uracil residues from the DNA which can arise as a result of misincorporation of dUMP residues by DNA polymerase or due to deamination of cytosine. The chain is Uracil-DNA glycosylase 1 from Bacteroides fragilis (strain ATCC 25285 / DSM 2151 / CCUG 4856 / JCM 11019 / LMG 10263 / NCTC 9343 / Onslow / VPI 2553 / EN-2).